Here is a 417-residue protein sequence, read N- to C-terminus: Gamma-glutamyl phosphate reductase (417 aa).

The protein belongs to the gamma-glutamyl phosphate reductase family.

It is found in the cytoplasm. It carries out the reaction L-glutamate 5-semialdehyde + phosphate + NADP(+) = L-glutamyl 5-phosphate + NADPH + H(+). It participates in amino-acid biosynthesis; L-proline biosynthesis; L-glutamate 5-semialdehyde from L-glutamate: step 2/2. Its function is as follows. Catalyzes the NADPH-dependent reduction of L-glutamate 5-phosphate into L-glutamate 5-semialdehyde and phosphate. The product spontaneously undergoes cyclization to form 1-pyrroline-5-carboxylate. The polypeptide is Gamma-glutamyl phosphate reductase (Legionella pneumophila subsp. pneumophila (strain Philadelphia 1 / ATCC 33152 / DSM 7513)).